The following is a 585-amino-acid chain: 3-hydroxy-3-methylglutaryl-coenzyme A reductase 1 (585 aa).

2 consecutive transmembrane segments (helical) span residues leucine 38 to cysteine 58 and glutamate 77 to isoleucine 97. The segment at aspartate 98 to glutamate 169 is linker. The tract at residues glutamate 170–serine 585 is catalytic. Glutamate 264 serves as the catalytic Charge relay system. Asparagine 328 is a glycosylation site (N-linked (GlcNAc...) asparagine). Lysine 396 acts as the Charge relay system in catalysis. The N-linked (GlcNAc...) asparagine glycan is linked to asparagine 441. Aspartate 472 functions as the Charge relay system in the catalytic mechanism. Catalysis depends on histidine 570, which acts as the Proton donor. Asparagine 574 is a glycosylation site (N-linked (GlcNAc...) asparagine).

Belongs to the HMG-CoA reductase family.

It localises to the endoplasmic reticulum membrane. The protein localises to the mitochondrion membrane. The protein resides in the plastid membrane. It catalyses the reaction (R)-mevalonate + 2 NADP(+) + CoA = (3S)-3-hydroxy-3-methylglutaryl-CoA + 2 NADPH + 2 H(+). It functions in the pathway metabolic intermediate biosynthesis; (R)-mevalonate biosynthesis; (R)-mevalonate from acetyl-CoA: step 3/3. Catalyzes the synthesis of mevalonate. The specific precursor of all isoprenoid compounds present in plants. The protein is 3-hydroxy-3-methylglutaryl-coenzyme A reductase 1 (HMG1) of Gossypium hirsutum (Upland cotton).